A 461-amino-acid polypeptide reads, in one-letter code: Siroheme synthase (461 aa).

The segment at Met-1–Ile-204 is precorrin-2 dehydrogenase /sirohydrochlorin ferrochelatase. NAD(+) is bound by residues Ile-22–Val-23 and Lys-43–Thr-44. Ser-128 carries the post-translational modification Phosphoserine. The uroporphyrinogen-III C-methyltransferase stretch occupies residues Gly-218 to Gly-461. Residue Pro-227 coordinates S-adenosyl-L-methionine. Catalysis depends on Asp-250, which acts as the Proton acceptor. Lys-272 serves as the catalytic Proton donor. Residues Gly-303–Asp-305, Ile-308, Met-386, and Gly-415 contribute to the S-adenosyl-L-methionine site.

It in the N-terminal section; belongs to the precorrin-2 dehydrogenase / sirohydrochlorin ferrochelatase family. This sequence in the C-terminal section; belongs to the precorrin methyltransferase family.

The enzyme catalyses uroporphyrinogen III + 2 S-adenosyl-L-methionine = precorrin-2 + 2 S-adenosyl-L-homocysteine + H(+). The catalysed reaction is precorrin-2 + NAD(+) = sirohydrochlorin + NADH + 2 H(+). It carries out the reaction siroheme + 2 H(+) = sirohydrochlorin + Fe(2+). The protein operates within cofactor biosynthesis; adenosylcobalamin biosynthesis; precorrin-2 from uroporphyrinogen III: step 1/1. It participates in cofactor biosynthesis; adenosylcobalamin biosynthesis; sirohydrochlorin from precorrin-2: step 1/1. It functions in the pathway porphyrin-containing compound metabolism; siroheme biosynthesis; precorrin-2 from uroporphyrinogen III: step 1/1. Its pathway is porphyrin-containing compound metabolism; siroheme biosynthesis; siroheme from sirohydrochlorin: step 1/1. The protein operates within porphyrin-containing compound metabolism; siroheme biosynthesis; sirohydrochlorin from precorrin-2: step 1/1. Its function is as follows. Multifunctional enzyme that catalyzes the SAM-dependent methylations of uroporphyrinogen III at position C-2 and C-7 to form precorrin-2 via precorrin-1. Then it catalyzes the NAD-dependent ring dehydrogenation of precorrin-2 to yield sirohydrochlorin. Finally, it catalyzes the ferrochelation of sirohydrochlorin to yield siroheme. The protein is Siroheme synthase of Blochmanniella floridana.